The following is a 547-amino-acid chain: MHRRRRDNLMTPAEMVASMKPPQSLSTEDDDGSRRDSESSADVLKSNEEFQARMIPEDDDANSVTAQPTWTVLSDTEIKSVLVVASFAAAISPFSTSTYYPAVFAISQDLGVSVSKINLTMSSYQIFQGVAPTITAAFADTYGRRPMFLVCFAIYFVANVGLALQNNFTTLLVLRCLQSTGSSGTFALAQAVTADITTRAERGRYLIYATLGSTLGPFLGPVIGGLLVKFLGWRSVFWFLLCMGTVFALLIFIFFGETARPIVGDGSVPPQSWNRSFLQIRSKGITSLKPNLASLERRKSRPNPLTSLALLWDRENFILSVSGGLLYAGYSSVTSVLASQLQQRYKYDAVQVGLCYLPVGFGSLLAYRTTVRLMDWNFEREAKKQGLVIVKNQQTDITRFDLEKARLGFVFPMILVCSVLLVAYGWQMHYHAPLAPILVTMFLIAIILTGVMNAIAALLTDVNRENAAAVGAAMNLTRLLLGAGAVAVVGPLNKSAGIGWTATVTAGLWVLMMPTLRMVYRDGFVWRAGENERVHASNVELAALVRS.

The disordered stretch occupies residues 1–45 (MHRRRRDNLMTPAEMVASMKPPQSLSTEDDDGSRRDSESSADVLK). The chain crosses the membrane as a helical span at residues 81–101 (VLVVASFAAAISPFSTSTYYP). Asn-118 carries N-linked (GlcNAc...) asparagine glycosylation. The chain crosses the membrane as a helical span at residues 146–166 (PMFLVCFAIYFVANVGLALQN). An N-linked (GlcNAc...) asparagine glycan is attached at Asn-167. 2 helical membrane-spanning segments follow: residues 206 to 226 (LIYA…IGGL) and 236 to 256 (VFWF…IFFG). N-linked (GlcNAc...) asparagine glycosylation occurs at Asn-274. 5 consecutive transmembrane segments (helical) span residues 317–337 (FILS…TSVL), 347–367 (YDAV…LLAY), 407–427 (LGFV…YGWQ), 432–452 (APLA…TGVM), and 469–489 (AVGA…VAVV). A glycan (N-linked (GlcNAc...) asparagine) is linked at Asn-493. A helical transmembrane segment spans residues 496–516 (AGIGWTATVTAGLWVLMMPTL).

It belongs to the major facilitator superfamily. CAR1 family.

It is found in the membrane. Its function is as follows. MFS-type transporter; part of the gene cluster that mediates the biosynthesis of squalestatin S1 (SQS1, also known as zaragozic acid A), a heavily oxidized fungal polyketide that offers potent cholesterol lowering activity by targeting squalene synthase (SS). The polypeptide is MFS-type transporter M6 (Phoma sp. (strain ATCC 20986 / MF5453)).